We begin with the raw amino-acid sequence, 406 residues long: Cysteine desulfurase (406 aa).

At K226 the chain carries N6-(pyridoxal phosphate)lysine. C364 functions as the Cysteine persulfide intermediate in the catalytic mechanism.

The protein belongs to the class-V pyridoxal-phosphate-dependent aminotransferase family. Csd subfamily. In terms of assembly, homodimer. Interacts with SufE and the SufBCD complex composed of SufB, SufC and SufD. The interaction with SufE is required to mediate the direct transfer of the sulfur atom from the S-sulfanylcysteine. Requires pyridoxal 5'-phosphate as cofactor.

Its subcellular location is the cytoplasm. It carries out the reaction (sulfur carrier)-H + L-cysteine = (sulfur carrier)-SH + L-alanine. It catalyses the reaction L-selenocysteine + AH2 = hydrogenselenide + L-alanine + A + H(+). Its pathway is cofactor biosynthesis; iron-sulfur cluster biosynthesis. Functionally, cysteine desulfurases mobilize the sulfur from L-cysteine to yield L-alanine, an essential step in sulfur metabolism for biosynthesis of a variety of sulfur-containing biomolecules. Component of the suf operon, which is activated and required under specific conditions such as oxidative stress and iron limitation. Acts as a potent selenocysteine lyase in vitro, that mobilizes selenium from L-selenocysteine. Selenocysteine lyase activity is however unsure in vivo. The chain is Cysteine desulfurase from Escherichia coli O9:H4 (strain HS).